Here is a 949-residue protein sequence, read N- to C-terminus: Glycine dehydrogenase (decarboxylating) (949 aa).

Lysine 704 is subject to N6-(pyridoxal phosphate)lysine.

Belongs to the GcvP family. In terms of assembly, the glycine cleavage system is composed of four proteins: P, T, L and H. Pyridoxal 5'-phosphate serves as cofactor.

The catalysed reaction is N(6)-[(R)-lipoyl]-L-lysyl-[glycine-cleavage complex H protein] + glycine + H(+) = N(6)-[(R)-S(8)-aminomethyldihydrolipoyl]-L-lysyl-[glycine-cleavage complex H protein] + CO2. Its function is as follows. The glycine cleavage system catalyzes the degradation of glycine. The P protein binds the alpha-amino group of glycine through its pyridoxal phosphate cofactor; CO(2) is released and the remaining methylamine moiety is then transferred to the lipoamide cofactor of the H protein. This is Glycine dehydrogenase (decarboxylating) from Bacteroides fragilis (strain ATCC 25285 / DSM 2151 / CCUG 4856 / JCM 11019 / LMG 10263 / NCTC 9343 / Onslow / VPI 2553 / EN-2).